The sequence spans 273 residues: Hydroxyethylthiazole kinase (273 aa).

Met-49 contacts substrate. 2 residues coordinate ATP: Arg-125 and Thr-171. Gly-198 lines the substrate pocket.

Belongs to the Thz kinase family. It depends on Mg(2+) as a cofactor.

The catalysed reaction is 5-(2-hydroxyethyl)-4-methylthiazole + ATP = 4-methyl-5-(2-phosphooxyethyl)-thiazole + ADP + H(+). It functions in the pathway cofactor biosynthesis; thiamine diphosphate biosynthesis; 4-methyl-5-(2-phosphoethyl)-thiazole from 5-(2-hydroxyethyl)-4-methylthiazole: step 1/1. Catalyzes the phosphorylation of the hydroxyl group of 4-methyl-5-beta-hydroxyethylthiazole (THZ). This is Hydroxyethylthiazole kinase from Desulforudis audaxviator (strain MP104C).